A 367-amino-acid polypeptide reads, in one-letter code: Probable dual-specificity RNA methyltransferase RlmN (367 aa).

E92 functions as the Proton acceptor in the catalytic mechanism. Residues 98–326 (QEYGLSVCVT…YDTLKKNGIN (229 aa)) enclose the Radical SAM core domain. C105 and C341 form a disulfide bridge. The [4Fe-4S] cluster site is built by C112, C116, and C119. S-adenosyl-L-methionine-binding positions include 164–165 (GE), S196, 219–221 (SLH), and N297. The active-site S-methylcysteine intermediate is the C341.

Belongs to the radical SAM superfamily. RlmN family. [4Fe-4S] cluster serves as cofactor.

It is found in the cytoplasm. The catalysed reaction is adenosine(2503) in 23S rRNA + 2 reduced [2Fe-2S]-[ferredoxin] + 2 S-adenosyl-L-methionine = 2-methyladenosine(2503) in 23S rRNA + 5'-deoxyadenosine + L-methionine + 2 oxidized [2Fe-2S]-[ferredoxin] + S-adenosyl-L-homocysteine. It carries out the reaction adenosine(37) in tRNA + 2 reduced [2Fe-2S]-[ferredoxin] + 2 S-adenosyl-L-methionine = 2-methyladenosine(37) in tRNA + 5'-deoxyadenosine + L-methionine + 2 oxidized [2Fe-2S]-[ferredoxin] + S-adenosyl-L-homocysteine. Its function is as follows. Specifically methylates position 2 of adenine 2503 in 23S rRNA and position 2 of adenine 37 in tRNAs. The chain is Probable dual-specificity RNA methyltransferase RlmN from Listeria welshimeri serovar 6b (strain ATCC 35897 / DSM 20650 / CCUG 15529 / CIP 8149 / NCTC 11857 / SLCC 5334 / V8).